Here is a 310-residue protein sequence, read N- to C-terminus: E3 ubiquitin-protein ligase CSU1 (310 aa).

The RING-type 1; degenerate zinc finger occupies 43–67 (CSLCLKPFIDPMCCHKGHVFCRECI). Residues 75 to 95 (KKDIQRRLAAHSSQKKQDKDE) are a coiled coil. The interval 110–138 (EFDQQNHSAMPRNSDKNHNEDKNGFHGAN) is disordered. Over residues 122–133 (NSDKNHNEDKNG) the composition is skewed to basic and acidic residues. Residues 221–263 (CPSCKVTLTNTMSLVALSSCGHVFCKKCAEKFMPVDKVCLVCD) form an RING-type 2 zinc finger.

It belongs to the NOSIP family.

It is found in the nucleus. It localises to the nucleus speckle. It carries out the reaction S-ubiquitinyl-[E2 ubiquitin-conjugating enzyme]-L-cysteine + [acceptor protein]-L-lysine = [E2 ubiquitin-conjugating enzyme]-L-cysteine + N(6)-ubiquitinyl-[acceptor protein]-L-lysine.. It participates in protein modification; protein ubiquitination. In terms of biological role, RING-finger E3 ubiquitin-protein ligase that plays an major role in maintaining COP1 homeostasis in darkness. Negatively regulates COP1 protein accumulation by targeting COP1 for ubiquitination and subsequent proteasomal degradation in dark-grown seedlings. Negatively regulates the accumulation of SPA1 protein in the dark. The polypeptide is E3 ubiquitin-protein ligase CSU1 (Arabidopsis thaliana (Mouse-ear cress)).